A 188-amino-acid polypeptide reads, in one-letter code: Elongation factor P-like protein (188 aa).

Belongs to the elongation factor P family.

This Vibrio parahaemolyticus serotype O3:K6 (strain RIMD 2210633) protein is Elongation factor P-like protein.